Consider the following 185-residue polypeptide: Intraflagellar transport protein 22 homolog (185 aa).

GTP-binding positions include 10–17, 63–67, and 123–126; these read GPCESGKT, DCGGD, and HKPG. Phosphoserine is present on serine 137.

The protein belongs to the small GTPase superfamily. Rab family. Component of the IFT complex B, at least composed of IFT20, IFT22, IFT25, IFT27, IFT46, IFT52, TRAF3IP1/IFT54, IFT57, IFT74, IFT80, IFT81, and IFT88. Interacts with IFT88. Interacts with CFAP61.

Its subcellular location is the cell projection. The protein resides in the cilium. Functionally, small GTPase-like component of the intraflagellar transport (IFT) complex B. This Homo sapiens (Human) protein is Intraflagellar transport protein 22 homolog (IFT22).